Consider the following 237-residue polypeptide: 1-(5-phosphoribosyl)-5-[(5-phosphoribosylamino)methylideneamino] imidazole-4-carboxamide isomerase (237 aa).

Catalysis depends on Asp8, which acts as the Proton acceptor. Residue Asp129 is the Proton donor of the active site.

It belongs to the HisA/HisF family.

It localises to the cytoplasm. The catalysed reaction is 1-(5-phospho-beta-D-ribosyl)-5-[(5-phospho-beta-D-ribosylamino)methylideneamino]imidazole-4-carboxamide = 5-[(5-phospho-1-deoxy-D-ribulos-1-ylimino)methylamino]-1-(5-phospho-beta-D-ribosyl)imidazole-4-carboxamide. It participates in amino-acid biosynthesis; L-histidine biosynthesis; L-histidine from 5-phospho-alpha-D-ribose 1-diphosphate: step 4/9. The chain is 1-(5-phosphoribosyl)-5-[(5-phosphoribosylamino)methylideneamino] imidazole-4-carboxamide isomerase from Dehalococcoides mccartyi (strain ATCC BAA-2266 / KCTC 15142 / 195) (Dehalococcoides ethenogenes (strain 195)).